A 1045-amino-acid polypeptide reads, in one-letter code: FERM, ARHGEF and pleckstrin domain-containing protein 1 (1045 aa).

The segment at 1–37 is disordered; it reads MGEIEQRPTPGSRLGAPENSGISTLERGQKPPPTPSG. A phosphoserine mark is found at Ser-20 and Ser-23. A Phosphothreonine modification is found at Thr-24. The FERM domain maps to 40–320; the sequence is VSIKIQMLDD…EHHAFFRLFE (281 aa). Residues Ser-340, Ser-373, Ser-389, Ser-403, Ser-418, Ser-427, and Ser-433 each carry the phosphoserine modification. Residues 361-534 are disordered; the sequence is FERKHSKIHS…TDDEDEGRRK (174 aa). The span at 373-396 shows a compositional bias: polar residues; the sequence is SLASQPTELNSEVLEQSQQSTSLT. 2 stretches are compositionally biased toward polar residues: residues 471-489 and 496-511; these read TGSLTGSPHLSELSVNSQG and VTLSPNLSPDTKQASP. Residues Ser-510 and Ser-514 each carry the phosphoserine modification. Positions 540 to 730 constitute a DH domain; sequence KAYFIAKEVS…TEMVAQLHGT (191 aa). Residues 759–856 enclose the PH 1 domain; the sequence is EFIRLGSLSK…WVEDIQMAID (98 aa). Phosphoserine occurs at positions 833, 872, and 878. Residues 864–903 are disordered; the sequence is PAPEFLASSPPDNKSPDEATAADQESEDDLSASRTSLERQ. Residue Thr-883 is modified to Phosphothreonine. A phosphoserine mark is found at Ser-889, Ser-896, and Ser-899. The region spanning 932 to 1029 is the PH 2 domain; the sequence is ENQLSGNLLR…WMEVIRSATS (98 aa).

In terms of assembly, interacts with CADM1. Interacts with RAC1. In terms of tissue distribution, detected in cAMP-treated chondrocytes, but not in untreated chondrocytes. Detected in fetal brain, heart and spleen, and in adult testis, kidney and lung.

It localises to the cell membrane. The protein resides in the synapse. It is found in the synaptosome. Its subcellular location is the cytoplasm. The protein localises to the cytosol. It localises to the cell projection. The protein resides in the filopodium. It is found in the dendrite. Its subcellular location is the dendritic spine. In terms of biological role, functions as a guanine nucleotide exchange factor for RAC1. May play a role in semaphorin signaling. Plays a role in the assembly and disassembly of dendritic filopodia, the formation of dendritic spines, regulation of dendrite length and ultimately the formation of synapses. The polypeptide is FERM, ARHGEF and pleckstrin domain-containing protein 1 (FARP1) (Homo sapiens (Human)).